A 201-amino-acid chain; its full sequence is ATP-dependent Clp protease proteolytic subunit (201 aa).

Catalysis depends on S97, which acts as the Nucleophile. H122 is an active-site residue.

The protein belongs to the peptidase S14 family. As to quaternary structure, fourteen ClpP subunits assemble into 2 heptameric rings which stack back to back to give a disk-like structure with a central cavity, resembling the structure of eukaryotic proteasomes.

The protein localises to the cytoplasm. The enzyme catalyses Hydrolysis of proteins to small peptides in the presence of ATP and magnesium. alpha-casein is the usual test substrate. In the absence of ATP, only oligopeptides shorter than five residues are hydrolyzed (such as succinyl-Leu-Tyr-|-NHMec, and Leu-Tyr-Leu-|-Tyr-Trp, in which cleavage of the -Tyr-|-Leu- and -Tyr-|-Trp bonds also occurs).. In terms of biological role, cleaves peptides in various proteins in a process that requires ATP hydrolysis. Has a chymotrypsin-like activity. Plays a major role in the degradation of misfolded proteins. The polypeptide is ATP-dependent Clp protease proteolytic subunit (Nitratidesulfovibrio vulgaris (strain DSM 19637 / Miyazaki F) (Desulfovibrio vulgaris)).